Consider the following 316-residue polypeptide: 4-hydroxy-3-methylbut-2-enyl diphosphate reductase (316 aa).

Cysteine 18 is a binding site for [4Fe-4S] cluster. The (2E)-4-hydroxy-3-methylbut-2-enyl diphosphate site is built by histidine 47 and histidine 80. Residues histidine 47 and histidine 80 each contribute to the dimethylallyl diphosphate site. The isopentenyl diphosphate site is built by histidine 47 and histidine 80. Cysteine 102 is a [4Fe-4S] cluster binding site. Residue histidine 130 coordinates (2E)-4-hydroxy-3-methylbut-2-enyl diphosphate. Histidine 130 serves as a coordination point for dimethylallyl diphosphate. An isopentenyl diphosphate-binding site is contributed by histidine 130. Catalysis depends on glutamate 132, which acts as the Proton donor. Threonine 171 serves as a coordination point for (2E)-4-hydroxy-3-methylbut-2-enyl diphosphate. Cysteine 201 lines the [4Fe-4S] cluster pocket. (2E)-4-hydroxy-3-methylbut-2-enyl diphosphate contacts are provided by serine 229, serine 230, asparagine 231, and serine 274. Residues serine 229, serine 230, asparagine 231, and serine 274 each contribute to the dimethylallyl diphosphate site. 4 residues coordinate isopentenyl diphosphate: serine 229, serine 230, asparagine 231, and serine 274.

This sequence belongs to the IspH family. [4Fe-4S] cluster serves as cofactor.

The enzyme catalyses isopentenyl diphosphate + 2 oxidized [2Fe-2S]-[ferredoxin] + H2O = (2E)-4-hydroxy-3-methylbut-2-enyl diphosphate + 2 reduced [2Fe-2S]-[ferredoxin] + 2 H(+). It carries out the reaction dimethylallyl diphosphate + 2 oxidized [2Fe-2S]-[ferredoxin] + H2O = (2E)-4-hydroxy-3-methylbut-2-enyl diphosphate + 2 reduced [2Fe-2S]-[ferredoxin] + 2 H(+). It participates in isoprenoid biosynthesis; dimethylallyl diphosphate biosynthesis; dimethylallyl diphosphate from (2E)-4-hydroxy-3-methylbutenyl diphosphate: step 1/1. It functions in the pathway isoprenoid biosynthesis; isopentenyl diphosphate biosynthesis via DXP pathway; isopentenyl diphosphate from 1-deoxy-D-xylulose 5-phosphate: step 6/6. Its function is as follows. Catalyzes the conversion of 1-hydroxy-2-methyl-2-(E)-butenyl 4-diphosphate (HMBPP) into a mixture of isopentenyl diphosphate (IPP) and dimethylallyl diphosphate (DMAPP). Acts in the terminal step of the DOXP/MEP pathway for isoprenoid precursor biosynthesis. This chain is 4-hydroxy-3-methylbut-2-enyl diphosphate reductase, found in Ruegeria sp. (strain TM1040) (Silicibacter sp.).